The following is a 424-amino-acid chain: Glutamate-1-semialdehyde 2,1-aminomutase (424 aa).

N6-(pyridoxal phosphate)lysine is present on Lys263.

This sequence belongs to the class-III pyridoxal-phosphate-dependent aminotransferase family. HemL subfamily. In terms of assembly, homodimer. The cofactor is pyridoxal 5'-phosphate.

It is found in the cytoplasm. The enzyme catalyses (S)-4-amino-5-oxopentanoate = 5-aminolevulinate. It functions in the pathway porphyrin-containing compound metabolism; protoporphyrin-IX biosynthesis; 5-aminolevulinate from L-glutamyl-tRNA(Glu): step 2/2. This Campylobacter jejuni subsp. jejuni serotype O:23/36 (strain 81-176) protein is Glutamate-1-semialdehyde 2,1-aminomutase.